We begin with the raw amino-acid sequence, 296 residues long: MSNSMPIASPVRTQAIVNRYFMHAKKNLGQNFLVDLPAIKGIVEAADIQPGDQVIEIGPGIGSLTEQLLLAGAKVLAYEVDQDLPEILNNELPQKIDGEELKDRFKLVMKDVLKANFVEDNDGFLDLSKSVKIVANLPYYITTPIIFNLIKSDLDFSSLTLMMQKEVAERLVAKPKTKEYGPLSIAVQSRMNVRLAEEVKSTSFMPRPKVDSAVVVLTPLLEKPDINDYAFFDHVVKMCFAQRRKTLANNLKTLIKDKDEREKLINDLGLDVRVRPEELTLNQFVQLAHLLKDRQA.

Asn31, Leu33, Gly58, Glu79, Asp111, and Asn136 together coordinate S-adenosyl-L-methionine.

This sequence belongs to the class I-like SAM-binding methyltransferase superfamily. rRNA adenine N(6)-methyltransferase family. RsmA subfamily.

The protein localises to the cytoplasm. The enzyme catalyses adenosine(1518)/adenosine(1519) in 16S rRNA + 4 S-adenosyl-L-methionine = N(6)-dimethyladenosine(1518)/N(6)-dimethyladenosine(1519) in 16S rRNA + 4 S-adenosyl-L-homocysteine + 4 H(+). Functionally, specifically dimethylates two adjacent adenosines (A1518 and A1519) in the loop of a conserved hairpin near the 3'-end of 16S rRNA in the 30S particle. May play a critical role in biogenesis of 30S subunits. This chain is Ribosomal RNA small subunit methyltransferase A, found in Lactobacillus johnsonii (strain CNCM I-12250 / La1 / NCC 533).